The primary structure comprises 434 residues: Trigger factor (434 aa).

In terms of domain architecture, PPIase FKBP-type spans 160-245 (GDKVKMNFVG…LTEVLAANLP (86 aa)).

It belongs to the FKBP-type PPIase family. Tig subfamily.

It localises to the cytoplasm. It carries out the reaction [protein]-peptidylproline (omega=180) = [protein]-peptidylproline (omega=0). Functionally, involved in protein export. Acts as a chaperone by maintaining the newly synthesized protein in an open conformation. Functions as a peptidyl-prolyl cis-trans isomerase. In Shewanella sp. (strain ANA-3), this protein is Trigger factor.